A 284-amino-acid polypeptide reads, in one-letter code: Phosphonates import ATP-binding protein PhnC 1 (284 aa).

Residues 5-253 (IEVRGLSKSF…MLRDLYGSEA (249 aa)) form the ABC transporter domain. Position 38-45 (38-45 (GASGSGKS)) interacts with ATP.

It belongs to the ABC transporter superfamily. Phosphonates importer (TC 3.A.1.9.1) family. In terms of assembly, the complex is composed of two ATP-binding proteins (PhnC), two transmembrane proteins (PhnE) and a solute-binding protein (PhnD).

It is found in the cell inner membrane. It carries out the reaction phosphonate(out) + ATP + H2O = phosphonate(in) + ADP + phosphate + H(+). Its function is as follows. Part of the ABC transporter complex PhnCDE involved in phosphonates import. Responsible for energy coupling to the transport system. This is Phosphonates import ATP-binding protein PhnC 1 from Cupriavidus metallidurans (strain ATCC 43123 / DSM 2839 / NBRC 102507 / CH34) (Ralstonia metallidurans).